A 107-amino-acid chain; its full sequence is Cytochrome c2 (107 aa).

Q1 carries the pyrrolidone carboxylic acid modification. The heme c site is built by C13, C16, H17, and M79.

It belongs to the cytochrome c family. In terms of processing, binds 1 heme c group covalently per subunit.

It is found in the periplasm. In terms of biological role, cytochrome c2 is found mainly in purple, non-sulfur, photosynthetic bacteria where it functions as the electron donor to the oxidized bacteriochlorophyll in the photophosphorylation pathway. However, it may also have a role in the respiratory chain and is found in some non-photosynthetic bacteria. This is Cytochrome c2 from Rhodoplanes tepidamans (Rhodoplanes cryptolactis).